Here is a 462-residue protein sequence, read N- to C-terminus: Runt-related transcription factor 1 (462 aa).

The tract at residues 1 to 27 (MRIPVDTSTSRRFTPPSTTLSPGKMSE) is disordered. The span at 7–22 (TSTSRRFTPPSTTLSP) shows a compositional bias: low complexity. The 129-residue stretch at 50-178 (NMVEVLSDHP…TVDGPREPRR (129 aa)) folds into the Runt domain. The interval 80–84 (RCNKT) is interaction with DNA. Residues N112, E116, R139, and V170 each contribute to the chloride site. 2 interaction with DNA regions span residues 135–143 (RFVGRSGRG) and 168–177 (ITVDGPREPR). A disordered region spans residues 399–462 (MMSGGERSPP…RLEEAVWRPY (64 aa)). Composition is skewed to polar residues over residues 415–433 (TNAS…NQSD) and 440–450 (SHSNSPTNMGS). A compositionally biased stretch (basic and acidic residues) spans 453–462 (RLEEAVWRPY).

Heterodimer with cbfb. runx1 binds DNA as a monomer and through the Runt domain. DNA-binding is increased by heterodimerization. Shows a complex and dynamic expression pattern. In stage 14-24 embryos, expressed in a subset of neuroblasts in the lateral stripe of the neural plate. In late neurula stages, expression begins in the olfactory placodes. Also expressed in structures that play a role in blood formation: at stage 14, expressed on the anterior ventral side of the embryo in the anterior endomesoderm. As the embryo elongates, expression shifts gradually to a V-shaped expression pattern in the presumptive ventral blood island.

The protein resides in the nucleus. Functionally, involved in primitive hematopoiesis in the embryo. The polypeptide is Runt-related transcription factor 1 (Xenopus laevis (African clawed frog)).